We begin with the raw amino-acid sequence, 279 residues long: Urease accessory protein UreD (279 aa).

This sequence belongs to the UreD family. As to quaternary structure, ureD, UreF and UreG form a complex that acts as a GTP-hydrolysis-dependent molecular chaperone, activating the urease apoprotein by helping to assemble the nickel containing metallocenter of UreC. The UreE protein probably delivers the nickel.

It localises to the cytoplasm. Functionally, required for maturation of urease via the functional incorporation of the urease nickel metallocenter. This chain is Urease accessory protein UreD, found in Nitrosospira multiformis (strain ATCC 25196 / NCIMB 11849 / C 71).